The sequence spans 265 residues: Energy-coupling factor transporter transmembrane protein EcfT (265 aa).

6 consecutive transmembrane segments (helical) span residues 26 to 46, 47 to 67, 72 to 92, 107 to 127, 152 to 172, and 243 to 263; these read MVFV…QTYA, VGII…MFLF, PILF…KGGA, VIMG…TTIM, LPVH…PTLM, and HTYD…ILYL.

The protein belongs to the energy-coupling factor EcfT family. Forms a stable energy-coupling factor (ECF) transporter complex composed of 2 membrane-embedded substrate-binding proteins (S component), 2 ATP-binding proteins (A component) and 2 transmembrane proteins (T component). May be able to interact with more than 1 S component at a time.

The protein resides in the cell membrane. Its function is as follows. Transmembrane (T) component of an energy-coupling factor (ECF) ABC-transporter complex. Unlike classic ABC transporters this ECF transporter provides the energy necessary to transport a number of different substrates. The polypeptide is Energy-coupling factor transporter transmembrane protein EcfT (Macrococcus caseolyticus (strain JCSC5402) (Macrococcoides caseolyticum)).